Consider the following 306-residue polypeptide: Ribosomal protein L11 methyltransferase (306 aa).

4 residues coordinate S-adenosyl-L-methionine: T139, G173, D195, and N242.

The protein belongs to the methyltransferase superfamily. PrmA family.

The protein resides in the cytoplasm. It carries out the reaction L-lysyl-[protein] + 3 S-adenosyl-L-methionine = N(6),N(6),N(6)-trimethyl-L-lysyl-[protein] + 3 S-adenosyl-L-homocysteine + 3 H(+). In terms of biological role, methylates ribosomal protein L11. This is Ribosomal protein L11 methyltransferase from Nostoc sp. (strain PCC 7120 / SAG 25.82 / UTEX 2576).